A 290-amino-acid chain; its full sequence is Porphobilinogen deaminase (290 aa).

C237 is modified (S-(dipyrrolylmethanemethyl)cysteine).

The protein belongs to the HMBS family. In terms of assembly, monomer. The cofactor is dipyrromethane.

It catalyses the reaction 4 porphobilinogen + H2O = hydroxymethylbilane + 4 NH4(+). The protein operates within porphyrin-containing compound metabolism; protoporphyrin-IX biosynthesis; coproporphyrinogen-III from 5-aminolevulinate: step 2/4. Functionally, tetrapolymerization of the monopyrrole PBG into the hydroxymethylbilane pre-uroporphyrinogen in several discrete steps. The polypeptide is Porphobilinogen deaminase (Clostridium botulinum (strain Kyoto / Type A2)).